A 1396-amino-acid chain; its full sequence is Integrin alpha-PS2 (1396 aa).

The first 31 residues, 1-31 (MSGDSIHRRRMALHCPITSLILLLIAMSAHG), serve as a signal peptide directing secretion. The Extracellular portion of the chain corresponds to 32–1341 (YNIDLPSYVR…EPEPLQVPDV (1310 aa)). 7 FG-GAP repeats span residues 36–106 (LPSY…DCKL), 117–174 (NVDK…FTSH), 186–239 (RTNN…FPFK), 266–317 (STSE…RWNM), 318–383 (ANIF…TEEK), 386–445 (TTEH…GPLA), and 452–514 (KSEQ…FASN). N-linked (GlcNAc...) asparagine glycosylation is present at N69. Residue N209 is glycosylated (N-linked (GlcNAc...) asparagine). N322 is a glycosylation site (N-linked (GlcNAc...) asparagine). 6 N-linked (GlcNAc...) asparagine glycosylation sites follow: N584, N598, N741, N783, N833, and N959. Disordered regions lie at residues 960-1107 (STDA…LGTL) and 1159-1246 (PGFQ…KPLQ). Residues 963 to 979 (AGDKLSPKQVEQRRQED) show a composition bias toward basic and acidic residues. The span at 997-1006 (QAVQEPQVNQ) shows a compositional bias: polar residues. N1005 carries an N-linked (GlcNAc...) asparagine glycan. 2 stretches are compositionally biased toward low complexity: residues 1007–1021 (TSFT…SSGS) and 1060–1071 (QQQQQHQQLLLA). Residues 1082-1099 (VTFNDKSQFGGRNNNFHT) show a composition bias toward polar residues. Low complexity-rich tracts occupy residues 1162-1182 (QGQT…GYQT) and 1217-1226 (SSSSSSSSSS). N1299 and N1307 each carry an N-linked (GlcNAc...) asparagine glycan. Residues 1342-1366 (VPLWVVVLAACAGALIFLLLVWLLY) traverse the membrane as a helical segment. Residues 1367–1396 (KCGFFNRNRPTDHSQERQPLRNGYHGDEHL) lie on the Cytoplasmic side of the membrane. The interval 1377–1396 (TDHSQERQPLRNGYHGDEHL) is disordered.

It belongs to the integrin alpha chain family. In terms of assembly, heterodimer of an alpha and a beta subunit. The alpha subunit is composed of a heavy and a light chain linked by a disulfide bond. Alpha-PS2 associates with beta-PS. Post-translationally, the heavy-light chain cleavage site is either in 1230-1231, or 1233-1234, or 1243-1244. In terms of tissue distribution, in ovaries, highly expressed in follicle cells. At syncytial blastoderm stage, expressed in the embryonic mesodermal precursors but not in the ectoderm. At embryonic stages 7 and 10, expression is restricted to the mesoderm. At stage 12, expressed in the gonadal sheath and the interstitial cells of the gonad. In stage 16 embryos, expressed in the somatic and visceral muscles where localizes to sites of attachment between adjacent muscles. In third larval instar wing imaginal disk, expressed in the ventral compartment and in a subset of adepithelial and peripodial cells (at protein level).

Its subcellular location is the apical cell membrane. The protein resides in the lateral cell membrane. The protein localises to the basal cell membrane. In terms of biological role, alpha-PS2/beta-PS is a receptor for Tig, wb and Ten-m. Involved in the function and/or development of the olfactory system. This is Integrin alpha-PS2 (if) from Drosophila melanogaster (Fruit fly).